The following is a 342-amino-acid chain: tRNA-specific 2-thiouridylase MnmA (342 aa).

ATP contacts are provided by residues 6-13 and Leu-32; that span reads GMSGGVDS. Cys-99 serves as the catalytic Nucleophile. The cysteines at positions 99 and 190 are disulfide-linked. Residue Gly-124 coordinates ATP. The tract at residues 140–142 is interaction with tRNA; sequence KDQ. Cys-190 acts as the Cysteine persulfide intermediate in catalysis. Residues 292–293 are interaction with tRNA; it reads RY.

This sequence belongs to the MnmA/TRMU family.

Its subcellular location is the cytoplasm. The enzyme catalyses S-sulfanyl-L-cysteinyl-[protein] + uridine(34) in tRNA + AH2 + ATP = 2-thiouridine(34) in tRNA + L-cysteinyl-[protein] + A + AMP + diphosphate + H(+). In terms of biological role, catalyzes the 2-thiolation of uridine at the wobble position (U34) of tRNA, leading to the formation of s(2)U34. The sequence is that of tRNA-specific 2-thiouridylase MnmA from Hydrogenobaculum sp. (strain Y04AAS1).